We begin with the raw amino-acid sequence, 479 residues long: Dihydrolipoyl dehydrogenase (479 aa).

Residues 41 to 50, K59, A124, and 153 to 155 contribute to the FAD site; these read EKRGALGGTC and TGS. A disulfide bridge links C50 with C55. NAD(+) is bound by residues 190–197, E213, I247, and G284; that span reads GGGVIGLE. FAD contacts are provided by residues D325 and 332 to 335; that span reads MLAH. The active-site Proton acceptor is H458.

It belongs to the class-I pyridine nucleotide-disulfide oxidoreductase family. Homodimer. FAD is required as a cofactor.

It carries out the reaction N(6)-[(R)-dihydrolipoyl]-L-lysyl-[protein] + NAD(+) = N(6)-[(R)-lipoyl]-L-lysyl-[protein] + NADH + H(+). This chain is Dihydrolipoyl dehydrogenase, found in Trypanosoma brucei brucei.